The chain runs to 91 residues: Large ribosomal subunit protein uL23c (91 aa).

It belongs to the universal ribosomal protein uL23 family. Part of the 50S ribosomal subunit.

It is found in the plastid. Its subcellular location is the chloroplast. Binds to 23S rRNA. The sequence is that of Large ribosomal subunit protein uL23c (rpl23) from Pinus koraiensis (Korean pine).